The sequence spans 134 residues: Pro-opiomelanocortin (134 aa).

N-acetylserine is present on Ser1. At Val13 the chain carries Valine amide. Ser31 is modified (phosphoserine). Basic and acidic residues-rich tracts occupy residues 43–52 and 79–104; these read LARERPEPAR and SAEKKDEGPYKMEHFRWGSPAKDKRY. The interval 43–107 is disordered; that stretch reads LARERPEPAR…PAKDKRYGGF (65 aa).

This sequence belongs to the POMC family. Specific enzymatic cleavages at paired basic residues yield the different active peptides. As to expression, ACTH and MSH are produced by the pituitary gland.

The protein resides in the secreted. In terms of biological role, stimulates the adrenal glands to release cortisol. Functionally, anorexigenic peptide. Increases the pigmentation of skin by increasing melanin production in melanocytes. Its function is as follows. Increases the pigmentation of skin by increasing melanin production in melanocytes. Endogenous orexigenic opiate. In terms of biological role, endogenous opiate. This chain is Pro-opiomelanocortin (POMC), found in Loxodonta africana (African elephant).